Here is a 135-residue protein sequence, read N- to C-terminus: Large ribosomal subunit protein uL22c (135 aa).

The protein belongs to the universal ribosomal protein uL22 family. As to quaternary structure, part of the 50S ribosomal subunit.

It is found in the plastid. This protein binds specifically to 23S rRNA. Its function is as follows. The globular domain of the protein is located near the polypeptide exit tunnel on the outside of the subunit, while an extended beta-hairpin is found that lines the wall of the exit tunnel in the center of the 70S ribosome. In Cuscuta exaltata (Tall dodder), this protein is Large ribosomal subunit protein uL22c (rpl22).